The following is a 141-amino-acid chain: Hemoglobin subunit alpha-3 (141 aa).

At Ser1 the chain carries N-acetylserine. The region spanning 1-141 (SLSASEKAAV…VSAVLTSKYR (141 aa)) is the Globin domain. His58 contributes to the O2 binding site. Residue His87 participates in heme b binding.

This sequence belongs to the globin family. As to quaternary structure, heterotetramer of two alpha chains and two beta chains. In terms of tissue distribution, red blood cells.

In terms of biological role, this is a tadpole (larval) alpha chain. The chain is Hemoglobin subunit alpha-3 from Aquarana catesbeiana (American bullfrog).